The chain runs to 251 residues: MSTQPMPLSLTDAKPGQGEYRVRAGSEIRALLRRFADEELPITLATPDGVSYTTCLWADDPERAVLVLSADAADARVQRLIEAEEAVAVGYLDSVKIQFDLNGLMLVHGRDASALHAQFPREIYRFQRRDGFRVRPVGHACPELQLRVSGPTDTELTLRVLDLSHGGLALFLPDDQPALPVGTSVRAARLALDPLTQVQVALRVVHVAPLKESAHGSRLGCEIEGLSGVASRTLQRYIDQTQKRRRLLAVS.

The PilZ domain occupies 127–239 (QRRDGFRVRP…ASRTLQRYID (113 aa)).

Belongs to the YcgR family. As to quaternary structure, monomer. Interacts with the flagellar basal bodies.

The protein localises to the bacterial flagellum basal body. Acts as a flagellar brake, regulating swimming and swarming in a bis-(3'-5') cyclic diguanylic acid (c-di-GMP)-dependent manner. Binds 1 c-di-GMP dimer per subunit. Increasing levels of c-di-GMP lead to decreased motility. The polypeptide is Flagellar brake protein YcgR (Leptothrix cholodnii (strain ATCC 51168 / LMG 8142 / SP-6) (Leptothrix discophora (strain SP-6))).